The chain runs to 301 residues: tRNA (guanine-N(7)-)-methyltransferase (301 aa).

Residues 1–26 are disordered; sequence MSETPDSPRPVTPGSQASFGTYGGRP. S-adenosyl-L-methionine contacts are provided by Glu-85, Glu-110, Asn-137, and Asp-160. Residue Asp-160 is part of the active site. Substrate-binding residues include Lys-164 and Asp-196. Positions 244 to 270 are disordered; that stretch reads APVREGRAPVSTEHTGPNEGVDEEGGW. Residue 280–283 participates in substrate binding; sequence TSFE.

Belongs to the class I-like SAM-binding methyltransferase superfamily. TrmB family.

The catalysed reaction is guanosine(46) in tRNA + S-adenosyl-L-methionine = N(7)-methylguanosine(46) in tRNA + S-adenosyl-L-homocysteine. It participates in tRNA modification; N(7)-methylguanine-tRNA biosynthesis. Functionally, catalyzes the formation of N(7)-methylguanine at position 46 (m7G46) in tRNA. The polypeptide is tRNA (guanine-N(7)-)-methyltransferase (Paenarthrobacter aurescens (strain TC1)).